The sequence spans 460 residues: Glucan endo-1,3-beta-D-glucosidase (460 aa).

An N-terminal signal peptide occupies residues 1-26; that stretch reads MAANVQTSSLLFLVFLLLQNFYSANS. The Proton donor role is filled by Glu-123. The Nucleophile role is filled by Glu-268. The interval 352-371 is disordered; that stretch reads NTQNPTTPATPTPTPKAAGS. A glycan (N-linked (GlcNAc...) asparagine) is linked at Asn-355. A disulfide bridge links Cys-373 with Cys-435. Asn-447 carries N-linked (GlcNAc...) asparagine glycosylation.

This sequence belongs to the glycosyl hydrolase 17 family. In terms of assembly, homodimer. In terms of processing, glycosylated. Post-translationally, contains two additional disulfide bonds, but it is unclear if they are between the pairs Cys-392-Cys-398 and Cys-407-Cys-453 (PudMed:18096638) or between the pairs Cys-392-Cys-453 and Cys-398-Cys-407 (PudMed:12392450). As to expression, expressed only in pollen.

It localises to the secreted. The catalysed reaction is Hydrolysis of (1-&gt;3)-beta-D-glucosidic linkages in (1-&gt;3)-beta-D-glucans.. The protein is Glucan endo-1,3-beta-D-glucosidase (OLE9) of Olea europaea (Common olive).